A 122-amino-acid polypeptide reads, in one-letter code: 5'-AMP-activated protein kinase subunit beta-1 (122 aa).

Ser5, Ser61, Ser66, and Ser73 each carry phosphoserine. The glycogen-binding domain stretch occupies residues 33–122 (EVNDKASAQA…TVNNIIQVKK (90 aa)). At Thr113 the chain carries Phosphothreonine.

This sequence belongs to the 5'-AMP-activated protein kinase beta subunit family. In terms of assembly, AMPK is a heterotrimer of an alpha catalytic subunit (PRKAA1 or PRKAA2), a beta (PRKAB1 or PRKAB2) and a gamma non-catalytic subunits (PRKAG1, PRKAG2 or PRKAG3). Interacts with FNIP1 and FNIP2. In terms of processing, phosphorylated when associated with the catalytic subunit (PRKAA1 or PRKAA2). Phosphorylated by ULK1; leading to negatively regulate AMPK activity and suggesting the existence of a regulatory feedback loop between ULK1 and AMPK.

In terms of biological role, non-catalytic subunit of AMP-activated protein kinase (AMPK), an energy sensor protein kinase that plays a key role in regulating cellular energy metabolism. In response to reduction of intracellular ATP levels, AMPK activates energy-producing pathways and inhibits energy-consuming processes: inhibits protein, carbohydrate and lipid biosynthesis, as well as cell growth and proliferation. AMPK acts via direct phosphorylation of metabolic enzymes, and by longer-term effects via phosphorylation of transcription regulators. Also acts as a regulator of cellular polarity by remodeling the actin cytoskeleton; probably by indirectly activating myosin. Beta non-catalytic subunit acts as a scaffold on which the AMPK complex assembles, via its C-terminus that bridges alpha (PRKAA1 or PRKAA2) and gamma subunits (PRKAG1, PRKAG2 or PRKAG3). This Sus scrofa (Pig) protein is 5'-AMP-activated protein kinase subunit beta-1 (PRKAB1).